A 245-amino-acid chain; its full sequence is Sec-independent protein translocase protein TatC (245 aa).

6 consecutive transmembrane segments (helical) span residues 17 to 37, 73 to 93, 107 to 127, 159 to 179, 191 to 207, and 210 to 230; these read FISVACIVVMFIVCFALRSYI, FFAAFIFSLPVIFWQFWKFVA, FVSFASIMFAFGACFCYFVVV, VVVAFGLAFEMPVIAFFFAKI, FRIAVLVIFVFSAFMTP, and VLSQFLMAGPLCGLYGLSILI.

Belongs to the TatC family. In terms of assembly, the Tat system comprises two distinct complexes: a TatABC complex, containing multiple copies of TatA, TatB and TatC subunits, and a separate TatA complex, containing only TatA subunits. Substrates initially bind to the TatABC complex, which probably triggers association of the separate TatA complex to form the active translocon.

The protein resides in the cell inner membrane. Its function is as follows. Part of the twin-arginine translocation (Tat) system that transports large folded proteins containing a characteristic twin-arginine motif in their signal peptide across membranes. Together with TatB, TatC is part of a receptor directly interacting with Tat signal peptides. This is Sec-independent protein translocase protein TatC from Campylobacter jejuni subsp. jejuni serotype O:2 (strain ATCC 700819 / NCTC 11168).